The sequence spans 323 residues: Ribosomal RNA small subunit methyltransferase H (323 aa).

S-adenosyl-L-methionine contacts are provided by residues 39 to 41 (GGY), aspartate 57, phenylalanine 84, aspartate 103, and glutamine 110.

Belongs to the methyltransferase superfamily. RsmH family.

It localises to the cytoplasm. The catalysed reaction is cytidine(1402) in 16S rRNA + S-adenosyl-L-methionine = N(4)-methylcytidine(1402) in 16S rRNA + S-adenosyl-L-homocysteine + H(+). Functionally, specifically methylates the N4 position of cytidine in position 1402 (C1402) of 16S rRNA. The sequence is that of Ribosomal RNA small subunit methyltransferase H from Gluconobacter oxydans (strain 621H) (Gluconobacter suboxydans).